The sequence spans 101 residues: ATP synthase subunit c (101 aa).

2 consecutive transmembrane segments (helical) span residues 28–48 (SVVAAGVGLGLAALGGAVGMG) and 72–92 (MFIALAMIEAQVIYTLVIALI).

The protein belongs to the ATPase C chain family. F-type ATPases have 2 components, F(1) - the catalytic core - and F(0) - the membrane proton channel. F(1) has five subunits: alpha(3), beta(3), gamma(1), delta(1), epsilon(1). F(0) has three main subunits: a(1), b(2) and c(10-14). The alpha and beta chains form an alternating ring which encloses part of the gamma chain. F(1) is attached to F(0) by a central stalk formed by the gamma and epsilon chains, while a peripheral stalk is formed by the delta and b chains.

Its subcellular location is the cell inner membrane. Functionally, f(1)F(0) ATP synthase produces ATP from ADP in the presence of a proton or sodium gradient. F-type ATPases consist of two structural domains, F(1) containing the extramembraneous catalytic core and F(0) containing the membrane proton channel, linked together by a central stalk and a peripheral stalk. During catalysis, ATP synthesis in the catalytic domain of F(1) is coupled via a rotary mechanism of the central stalk subunits to proton translocation. In terms of biological role, key component of the F(0) channel; it plays a direct role in translocation across the membrane. A homomeric c-ring of between 10-14 subunits forms the central stalk rotor element with the F(1) delta and epsilon subunits. In Sulfurovum sp. (strain NBC37-1), this protein is ATP synthase subunit c.